Here is a 214-residue protein sequence, read N- to C-terminus: Ribonuclease HII (214 aa).

One can recognise an RNase H type-2 domain in the interval 26–214 (EIVCGVDEAG…PVREAFDLIR (189 aa)). A divalent metal cation contacts are provided by aspartate 32, glutamate 33, and aspartate 124.

It belongs to the RNase HII family. Mn(2+) serves as cofactor. Mg(2+) is required as a cofactor.

Its subcellular location is the cytoplasm. The catalysed reaction is Endonucleolytic cleavage to 5'-phosphomonoester.. In terms of biological role, endonuclease that specifically degrades the RNA of RNA-DNA hybrids. In Burkholderia pseudomallei (strain 668), this protein is Ribonuclease HII.